The chain runs to 422 residues: Kynurenine--oxoglutarate transaminase 1 (422 aa).

Substrate-binding residues include glycine 36 and asparagine 185. Residue lysine 247 is modified to N6-(pyridoxal phosphate)lysine. Arginine 398 contributes to the substrate binding site.

Belongs to the class-I pyridoxal-phosphate-dependent aminotransferase family. Homodimer. It depends on pyridoxal 5'-phosphate as a cofactor.

The protein localises to the cytoplasm. Its subcellular location is the cytosol. It catalyses the reaction L-kynurenine + 2-oxoglutarate = kynurenate + L-glutamate + H2O. It carries out the reaction 3-phenylpyruvate + L-glutamine = 2-oxoglutaramate + L-phenylalanine. The enzyme catalyses an S-substituted L-cysteine + H2O = a thiol + pyruvate + NH4(+). The protein operates within amino-acid degradation; L-kynurenine degradation; kynurenate from L-kynurenine: step 1/2. With respect to regulation, inhibited by tryptophan, indole-3-pyruvic acid, 3-indolepropionic acid, DL-indole-3-lactic acid, indole-3-acetic acid (IAC), amino-oxyacetate (AOAA), aminooxy-phenylpropionic acid (AOPP) and Tris. Its function is as follows. Catalyzes the irreversible transamination of the L-tryptophan metabolite L-kynurenine to form kynurenic acid (KA), an intermediate in the tryptophan catabolic pathway which is also a broad spectrum antagonist of the three ionotropic excitatory amino acid receptors among others. Also metabolizes the cysteine conjugates of certain halogenated alkenes and alkanes to form reactive metabolites. Catalyzes the beta-elimination of S-conjugates and Se-conjugates of L-(seleno)cysteine, resulting in the cleavage of the C-S or C-Se bond. This chain is Kynurenine--oxoglutarate transaminase 1, found in Homo sapiens (Human).